A 447-amino-acid chain; its full sequence is GTPase Der (447 aa).

2 consecutive EngA-type G domains span residues 4-165 (QIIT…PEEE) and 180-357 (LQIV…KIWN). GTP contacts are provided by residues 10 to 17 (GRPNVGKS), 57 to 61 (DTPGL), 119 to 122 (NKCE), 186 to 193 (GRPNAGKS), 233 to 237 (DTAGL), and 298 to 301 (NKWD). Residues 358–443 (KKITTSKLNE…PIRFTYVKTK (86 aa)) form the KH-like domain.

It belongs to the TRAFAC class TrmE-Era-EngA-EngB-Septin-like GTPase superfamily. EngA (Der) GTPase family. In terms of assembly, associates with the 50S ribosomal subunit.

Functionally, GTPase that plays an essential role in the late steps of ribosome biogenesis. The sequence is that of GTPase Der from Rickettsia rickettsii (strain Iowa).